The primary structure comprises 450 residues: 3-phosphoshikimate 1-carboxyvinyltransferase (450 aa).

Positions 28, 29, and 33 each coordinate 3-phosphoshikimate. Position 28 (Lys-28) interacts with phosphoenolpyruvate. Positions 100 and 128 each coordinate phosphoenolpyruvate. Positions 173, 175, 326, and 353 each coordinate 3-phosphoshikimate. Gln-175 is a binding site for phosphoenolpyruvate. The Proton acceptor role is filled by Asp-326. Residues Arg-357 and Arg-402 each contribute to the phosphoenolpyruvate site.

This sequence belongs to the EPSP synthase family. Monomer.

The protein localises to the cytoplasm. It carries out the reaction 3-phosphoshikimate + phosphoenolpyruvate = 5-O-(1-carboxyvinyl)-3-phosphoshikimate + phosphate. It functions in the pathway metabolic intermediate biosynthesis; chorismate biosynthesis; chorismate from D-erythrose 4-phosphate and phosphoenolpyruvate: step 6/7. Catalyzes the transfer of the enolpyruvyl moiety of phosphoenolpyruvate (PEP) to the 5-hydroxyl of shikimate-3-phosphate (S3P) to produce enolpyruvyl shikimate-3-phosphate and inorganic phosphate. The polypeptide is 3-phosphoshikimate 1-carboxyvinyltransferase (Brucella abortus biovar 1 (strain 9-941)).